A 226-amino-acid polypeptide reads, in one-letter code: PKHD-type hydroxylase Nwi_0701 (226 aa).

The Fe2OG dioxygenase domain maps to 78–178 (KVLPPRFNRY…RLAAFFWTQS (101 aa)). Positions 96, 98, and 159 each coordinate Fe cation. Arg-169 provides a ligand contact to 2-oxoglutarate.

Fe(2+) is required as a cofactor. It depends on L-ascorbate as a cofactor.

In Nitrobacter winogradskyi (strain ATCC 25391 / DSM 10237 / CIP 104748 / NCIMB 11846 / Nb-255), this protein is PKHD-type hydroxylase Nwi_0701.